Consider the following 420-residue polypeptide: tRNA(Ile)-lysidine synthase (420 aa).

28-33 (SGGLDS) provides a ligand contact to ATP.

Belongs to the tRNA(Ile)-lysidine synthase family.

Its subcellular location is the cytoplasm. It catalyses the reaction cytidine(34) in tRNA(Ile2) + L-lysine + ATP = lysidine(34) in tRNA(Ile2) + AMP + diphosphate + H(+). Functionally, ligates lysine onto the cytidine present at position 34 of the AUA codon-specific tRNA(Ile) that contains the anticodon CAU, in an ATP-dependent manner. Cytidine is converted to lysidine, thus changing the amino acid specificity of the tRNA from methionine to isoleucine. The sequence is that of tRNA(Ile)-lysidine synthase from Hydrogenovibrio crunogenus (strain DSM 25203 / XCL-2) (Thiomicrospira crunogena).